Here is a 165-residue protein sequence, read N- to C-terminus: uncharacterized protein (165 aa).

Belongs to the IIV-6 196R family.

This is an uncharacterized protein from Invertebrate iridescent virus 3 (IIV-3).